Reading from the N-terminus, the 257-residue chain is DNA repair protein RecO (257 aa).

Belongs to the RecO family.

In terms of biological role, involved in DNA repair and RecF pathway recombination. The polypeptide is DNA repair protein RecO (Synechococcus sp. (strain CC9605)).